A 155-amino-acid chain; its full sequence is Small ribosomal subunit protein uS7 (155 aa).

The protein belongs to the universal ribosomal protein uS7 family. Part of the 30S ribosomal subunit. Contacts proteins S9 and S11.

Its function is as follows. One of the primary rRNA binding proteins, it binds directly to 16S rRNA where it nucleates assembly of the head domain of the 30S subunit. Is located at the subunit interface close to the decoding center, probably blocks exit of the E-site tRNA. The sequence is that of Small ribosomal subunit protein uS7 from Amoebophilus asiaticus (strain 5a2).